The chain runs to 252 residues: PF03932 family protein CutC (252 aa).

The protein belongs to the CutC family.

The protein localises to the cytoplasm. This Pectobacterium atrosepticum (strain SCRI 1043 / ATCC BAA-672) (Erwinia carotovora subsp. atroseptica) protein is PF03932 family protein CutC.